The primary structure comprises 218 residues: Probable nicotinate-nucleotide adenylyltransferase (218 aa).

Belongs to the NadD family.

It catalyses the reaction nicotinate beta-D-ribonucleotide + ATP + H(+) = deamido-NAD(+) + diphosphate. It participates in cofactor biosynthesis; NAD(+) biosynthesis; deamido-NAD(+) from nicotinate D-ribonucleotide: step 1/1. In terms of biological role, catalyzes the reversible adenylation of nicotinate mononucleotide (NaMN) to nicotinic acid adenine dinucleotide (NaAD). The chain is Probable nicotinate-nucleotide adenylyltransferase from Corynebacterium glutamicum (strain ATCC 13032 / DSM 20300 / JCM 1318 / BCRC 11384 / CCUG 27702 / LMG 3730 / NBRC 12168 / NCIMB 10025 / NRRL B-2784 / 534).